Reading from the N-terminus, the 845-residue chain is Beta-mannosidase B (845 aa).

The disordered stretch occupies residues 1-20 (MSKLQQFPLSKGWSFRDSED). Asparagine 252 is a glycosylation site (N-linked (GlcNAc...) asparagine). The active-site Proton donor is glutamate 432. 2 N-linked (GlcNAc...) asparagine glycosylation sites follow: asparagine 717 and asparagine 723.

This sequence belongs to the glycosyl hydrolase 2 family. Beta-mannosidase B subfamily.

The enzyme catalyses Hydrolysis of terminal, non-reducing beta-D-mannose residues in beta-D-mannosides.. The protein operates within glycan metabolism; N-glycan degradation. In terms of biological role, exoglycosidase that cleaves the single beta-linked mannose residue from the non-reducing end of beta-mannosidic oligosaccharides of various complexity and length. Prefers mannobiose over mannotriose and has no activity against polymeric mannan. Is also severely restricted by galactosyl substitutions at the +1 subsite. In Neosartorya fischeri (strain ATCC 1020 / DSM 3700 / CBS 544.65 / FGSC A1164 / JCM 1740 / NRRL 181 / WB 181) (Aspergillus fischerianus), this protein is Beta-mannosidase B (mndB).